The chain runs to 204 residues: Methyl-CpG-binding domain protein 3-like 2B (204 aa).

The span at 126-137 shows a compositional bias: basic and acidic residues; sequence SLDRAGAERVRS. The tract at residues 126–145 is disordered; that stretch reads SLDRAGAERVRSPLEPTPGR.

Belongs to the MBD3L family.

In Homo sapiens (Human), this protein is Methyl-CpG-binding domain protein 3-like 2B.